Consider the following 175-residue polypeptide: CEN-like protein 4 (175 aa).

This sequence belongs to the phosphatidylethanolamine-binding protein family. As to expression, expressed in vegetative axillary meristems but not in the main shoot meristem.

It localises to the cytoplasm. Its function is as follows. May form complexes with phosphorylated ligands by interfering with kinases and their effectors. In Nicotiana tabacum (Common tobacco), this protein is CEN-like protein 4 (CET4).